We begin with the raw amino-acid sequence, 825 residues long: Breast cancer anti-estrogen resistance protein 3 (825 aa).

Ala2 is modified (N-acetylalanine). Phosphoserine is present on residues Ser32, Ser78, and Ser83. The disordered stretch occupies residues 40 to 106 (DAYQDVSIHG…DRHGETFTFR (67 aa)). Residues 79–94 (PRQNSPVTQDGIQESP) are compositionally biased toward polar residues. The segment covering 95–106 (WQDRHGETFTFR) has biased composition (basic and acidic residues). The region spanning 154–253 (WYHGRIPRQV…QSGAIIFQPI (100 aa)) is the SH2 domain. Phosphoserine occurs at positions 182 and 290. N6-methyllysine is present on Lys334. Phosphoserine occurs at positions 358, 363, and 375. An Omega-N-methylarginine modification is found at Arg442. Ser471 bears the Phosphoserine mark. Residues 548-818 (DPKVIAQHVL…TALSRKLEPP (271 aa)) enclose the Ras-GEF domain. Residues 744-748 (LATAR) are mediates the interaction with BCAR1/p130CAS.

Part of a complex comprised of PTPRA, BCAR1, BCAR3 (via SH2 domain) and SRC; the formation of the complex is dependent on integrin mediated-tyrosine phosphorylation of PTPRA. Within the complex, interacts (via SH2 domain) with PTPRA (when phosphorylated on 'Tyr-798'). Interacts (via Ras-GEF domain) with BCAR1. Interacts (via Ras-GEF domain) with NEDD9. Interacts with PTK2/FAK1. Interacts with PTPN1. Interacts (via SH2 domain) with EGFR (when tyrosine-phosphorylated). In terms of processing, phosphorylated on tyrosine residues. Ubiquitously expressed. Found in several cancer cell lines, but not in nonmalignant breast tissue.

It localises to the cytoplasm. The protein resides in the cell junction. It is found in the focal adhesion. In terms of biological role, acts as an adapter protein downstream of several growth factor receptors to promote cell proliferation, migration, and redistribution of actin fibers. Specifically involved in INS/insulin signaling pathway by mediating MAPK1/ERK2-MAPK3/ERK1 activation and DNA synthesis. Promotes insulin-mediated membrane ruffling. In response to vasoconstrictor peptide EDN1, involved in the activation of RAP1 downstream of PTK2B via interaction with phosphorylated BCAR1. Inhibits cell migration and invasion via regulation of TGFB-mediated matrix digestion, actin filament rearrangement, and inhibition of invadopodia activity. May inhibit TGFB-SMAD signaling, via facilitating BCAR1 and SMAD2 and/or SMAD3 interaction. Regulates EGF-induced DNA synthesis. Required for the maintenance of ocular lens morphology and structural integrity, potentially via regulation of focal adhesion complex signaling. Acts upstream of PTPRA to regulate the localization of BCAR1 and PTPRA to focal adhesions, via regulation of SRC-mediated phosphorylation of PTPRA. Positively regulates integrin-induced tyrosine phosphorylation of BCAR1. Acts as a guanine nucleotide exchange factor (GEF) for small GTPases RALA, RAP1A and RRAS. However, in a contrasting study, lacks GEF activity towards RAP1. The sequence is that of Breast cancer anti-estrogen resistance protein 3 (BCAR3) from Homo sapiens (Human).